Consider the following 267-residue polypeptide: tRNA pseudouridine synthase A (267 aa).

The Nucleophile role is filled by Asp54. Substrate is bound at residue Tyr112.

It belongs to the tRNA pseudouridine synthase TruA family. As to quaternary structure, homodimer.

The catalysed reaction is uridine(38/39/40) in tRNA = pseudouridine(38/39/40) in tRNA. In terms of biological role, formation of pseudouridine at positions 38, 39 and 40 in the anticodon stem and loop of transfer RNAs. The protein is tRNA pseudouridine synthase A of Bordetella avium (strain 197N).